The chain runs to 474 residues: Trehalose-6-phosphate synthase (474 aa).

Residue arginine 10 participates in D-glucose 6-phosphate binding. 22 to 23 contributes to the UDP-alpha-D-glucose binding site; sequence GG. D-glucose 6-phosphate is bound by residues tyrosine 77 and aspartate 131. Arginine 263 and lysine 268 together coordinate UDP-alpha-D-glucose. Position 301 (arginine 301) interacts with D-glucose 6-phosphate. Residues phenylalanine 340 and 366–370 each bind UDP-alpha-D-glucose; that span reads LVAKE.

This sequence belongs to the glycosyltransferase 20 family. In terms of assembly, homotetramer.

It catalyses the reaction D-glucose 6-phosphate + UDP-alpha-D-glucose = alpha,alpha-trehalose 6-phosphate + UDP + H(+). The protein operates within glycan biosynthesis; trehalose biosynthesis. Its function is as follows. Probably involved in the osmoprotection via the biosynthesis of trehalose. Catalyzes the transfer of glucose from UDP-alpha-D-glucose (UDP-Glc) to D-glucose 6-phosphate (Glc-6-P) to form trehalose-6-phosphate. Acts with retention of the anomeric configuration of the UDP-sugar donor. The polypeptide is Trehalose-6-phosphate synthase (Escherichia coli O1:K1 / APEC).